The following is a 465-amino-acid chain: Tyrosine 3-monooxygenase (465 aa).

Fe cation is bound by residues His-294, His-299, and Glu-339.

It belongs to the biopterin-dependent aromatic amino acid hydroxylase family. Requires Fe(2+) as cofactor.

The protein resides in the cytoplasm. It localises to the perinuclear region. The catalysed reaction is (6R)-L-erythro-5,6,7,8-tetrahydrobiopterin + L-tyrosine + O2 = (4aS,6R)-4a-hydroxy-L-erythro-5,6,7,8-tetrahydrobiopterin + L-dopa. Its pathway is catecholamine biosynthesis; dopamine biosynthesis; dopamine from L-tyrosine: step 1/2. The protein is Tyrosine 3-monooxygenase (TH) of Schistosoma mansoni (Blood fluke).